The chain runs to 1129 residues: Serine/threonine-protein kinase LATS1 (1129 aa).

Residues 1 to 11 (MKRGEKPEGYR) are compositionally biased toward basic and acidic residues. A disordered region spans residues 1–71 (MKRGEKPEGY…PRQVRNPPKF (71 aa)). Residues 19–30 (PASNYPGSSRQM) show a composition bias toward polar residues. Residues 46 to 64 (DASKAEHNLNKMSTEDPRQ) show a composition bias toward basic and acidic residues. One can recognise a UBA domain in the interval 100 to 141 (EVNPQMFQDLQAAGFDEDMVIQALQKTNNRSIEAAVEFISKM). 2 disordered regions span residues 148–216 (REQM…RPLS) and 228–276 (PSNG…QTKR). The segment covering 235–268 (NPPPPPQVRSVTPPPPPRGQTPPPRGTTPPPPSW) has biased composition (pro residues). A Phosphothreonine modification is found at threonine 246. Serine 278 bears the Phosphoserine mark. Disordered stretches follow at residues 292 to 317 (PPGAWQEGYPPPPLTTSPMNPPSQAQ), 363 to 407 (PTGS…VPQS), 432 to 492 (WPQS…TPAP), and 513 to 630 (PTHP…ESRI). Residues 300–312 (YPPPPLTTSPMNP) are compositionally biased toward pro residues. Positions 372–375 (PPPY) match the PPxY motif 1 motif. Polar residues predominate over residues 380–392 (ANGQSPSALQTGA). Positions 433–445 (PQSSSAPAQSSPS) are enriched in low complexity. The span at 453 to 481 (WQPNIPVRSNSFNNPLGSRASHSANSQPS) shows a compositional bias: polar residues. At serine 463 the chain carries Phosphoserine; by NUAK1 and NUAK2. 2 stretches are compositionally biased toward low complexity: residues 482–492 (ATTVTAITPAP) and 520–530 (PQPVQTVQPTP). Residues 525-654 (TVQPTPFSEG…HVENVLKSHQ (130 aa)) form an interaction with YAP1 region. Residues 555–558 (PPPY) carry the PPxY motif 2 motif. Positions 578 to 608 (PCKDEQPSLPKEDDSEKSADSGDSGDKEKKQ) are enriched in basic and acidic residues. The residue at position 612 (serine 612) is a Phosphoserine. Basic and acidic residues predominate over residues 620–629 (KKDEERRESR). Serine 673 is subject to Phosphoserine. The region spanning 704 to 1009 (FVKIKTLGIG…ADEIKAHPFF (306 aa)) is the Protein kinase domain. ATP contacts are provided by residues 710 to 718 (LGIGAFGEV) and lysine 733. The active-site Proton acceptor is aspartate 827. The residue at position 908 (serine 908) is a Phosphoserine; by STK3/MST2. The 80-residue stretch at 1010–1089 (KTIDFSSDLR…RRFFDDNGYP (80 aa)) folds into the AGC-kinase C-terminal domain. A Phosphothreonine; by STK3/MST2 modification is found at threonine 1078. The tract at residues 1104–1129 (QGSEQQSDEDDQHTSSDGNNRDLVYV) is disordered.

Belongs to the protein kinase superfamily. AGC Ser/Thr protein kinase family. As to quaternary structure, complexes with CDK1 in early mitosis. LATS1-associated CDK1 has no mitotic cyclin partner and no apparent kinase activity. Binds phosphorylated ZYX, locating this protein to the mitotic spindle and suggesting a role for actin regulatory proteins during mitosis. Binds to and colocalizes with LIMK1 at the actomyosin contractile ring during cytokinesis. Interacts (via PPxY motif 2) with YAP1 (via WW domains). Interacts with MOB1A and MOB1B. Interacts with LIMD1, WTIP and AJUBA. Interacts with ESR1, DCAF1 and DCAF13; probably recruits DCAF1 and DCAF13 to ESR1 to promote ESR1 ubiquitination and ubiquitin-mediated proteasomal degradation. Interacts with STK3/MST2; this interaction is inhibited in the presence of DLG5. Interacts with SCRIB in the presence of DLG5. Interacts with WWTR1/TAZ. Interacts with WWC1, WWC2 and WWC3 (via their WW domains). It depends on Mg(2+) as a cofactor. Post-translationally, autophosphorylated and phosphorylated during M-phase of the cell cycle. Phosphorylated by STK3/MST2 at Ser-908 and Thr-1078, which results in its activation. Phosphorylated by MAP4Ks; in parallel to STK3/MST2 and resulting to its activation. Phosphorylation at Ser-463 by NUAK1 and NUAK2 leads to decreased protein level and is required to regulate cellular senescence and cellular ploidy.

The protein localises to the cytoplasm. Its subcellular location is the cytoskeleton. The protein resides in the microtubule organizing center. It localises to the centrosome. It is found in the spindle. The protein localises to the midbody. Its subcellular location is the spindle pole body. The enzyme catalyses L-seryl-[protein] + ATP = O-phospho-L-seryl-[protein] + ADP + H(+). It catalyses the reaction L-threonyl-[protein] + ATP = O-phospho-L-threonyl-[protein] + ADP + H(+). Its function is as follows. Negative regulator of YAP1 in the Hippo signaling pathway that plays a pivotal role in organ size control and tumor suppression by restricting proliferation and promoting apoptosis. The core of this pathway is composed of a kinase cascade wherein STK3/MST2 and STK4/MST1, in complex with its regulatory protein SAV1, phosphorylates and activates LATS1/2 in complex with its regulatory protein MOB1, which in turn phosphorylates and inactivates YAP1 oncoprotein and WWTR1/TAZ. Phosphorylation of YAP1 by LATS1 inhibits its translocation into the nucleus to regulate cellular genes important for cell proliferation, cell death, and cell migration. Acts as a tumor suppressor which plays a critical role in maintenance of ploidy through its actions in both mitotic progression and the G1 tetraploidy checkpoint. Negatively regulates G2/M transition by down-regulating CDK1 kinase activity. Involved in the control of p53 expression. Affects cytokinesis by regulating actin polymerization through negative modulation of LIMK1. May also play a role in endocrine function. Plays a role in mammary gland epithelial cell differentiation, both through the Hippo signaling pathway and the intracellular estrogen receptor signaling pathway by promoting the degradation of ESR1. Acts as an activator of the NLRP3 inflammasome by mediating phosphorylation of 'Ser-265' of NLRP3 following NLRP3 palmitoylation, promoting NLRP3 activation by NEK7. The chain is Serine/threonine-protein kinase LATS1 from Mus musculus (Mouse).